Reading from the N-terminus, the 271-residue chain is Short-chain type dehydrogenase/reductase (271 aa).

Residue 25 to 49 (IVTGASRGIGREIALNMAEKGAKVV) participates in NAD(+) binding. Ser-166 is a substrate binding site. The active-site Proton acceptor is Tyr-179.

This sequence belongs to the short-chain dehydrogenases/reductases (SDR) family.

The chain is Short-chain type dehydrogenase/reductase from Picea abies (Norway spruce).